The sequence spans 175 residues: Methylated-DNA--protein-cysteine methyltransferase (175 aa).

DNA contacts are provided by Y115 and R127. The active-site Nucleophile; methyl group acceptor is C144.

Belongs to the MGMT family.

The protein resides in the nucleus. It catalyses the reaction a 6-O-methyl-2'-deoxyguanosine in DNA + L-cysteinyl-[protein] = S-methyl-L-cysteinyl-[protein] + a 2'-deoxyguanosine in DNA. The catalysed reaction is a 4-O-methyl-thymidine in DNA + L-cysteinyl-[protein] = a thymidine in DNA + S-methyl-L-cysteinyl-[protein]. Involved in the cellular defense against the biological effects of O6-methylguanine (O6-MeG) and O4-methylthymine (O4-MeT) in DNA. Repairs the methylated nucleobase in DNA by stoichiometrically transferring the methyl group to a cysteine residue in the enzyme. This is a suicide reaction: the enzyme is irreversibly inactivated. The polypeptide is Methylated-DNA--protein-cysteine methyltransferase (MGT1) (Candida albicans (strain SC5314 / ATCC MYA-2876) (Yeast)).